An 89-amino-acid chain; its full sequence is HssA/B-like protein 10 (89 aa).

This sequence belongs to the hssA/B family.

The chain is HssA/B-like protein 10 (hssl10) from Dictyostelium discoideum (Social amoeba).